Consider the following 163-residue polypeptide: Type-1 angiotensin II receptor-associated protein-like (163 aa).

The Extracellular segment spans residues 1-28; the sequence is MELPAVNLKAIVFTHWLLTVFACMIDWL. A helical membrane pass occupies residues 29-49; that stretch reads PKAYGLANITILAMGVWAIAQ. Residues 50-55 lie on the Cytoplasmic side of the membrane; it reads RDSIDA. Residues 56–76 form a helical membrane-spanning segment; sequence IFMFLIGLLLTILTDILLFAL. The Extracellular segment spans residues 77–95; it reads YFTEAEKASESGPLRDLFR. Residues 96-116 traverse the membrane as a helical segment; that stretch reads FSSGMGIFSLLLKPLSCFFMY. Over 117–163 the chain is Cytoplasmic; that stretch reads HMYRERGGEYFVNLGFITLSRDRSSYQSIEHMDPPADQDNKLPSRTY.

It localises to the membrane. Its function is as follows. Appears to be a negative regulator of angiotensin II type I receptor-mediated signaling. This Xenopus tropicalis (Western clawed frog) protein is Type-1 angiotensin II receptor-associated protein-like (agtrap).